The primary structure comprises 481 residues: Cysteine--tRNA ligase (481 aa).

Position 29 (C29) interacts with Zn(2+). Residues 31-41 (PTVYDYSHLGH) carry the 'HIGH' region motif. Zn(2+) is bound by residues C210, H235, and E239. The short motif at 272-276 (KMSKS) is the 'KMSKS' region element. K275 lines the ATP pocket.

It belongs to the class-I aminoacyl-tRNA synthetase family. In terms of assembly, monomer. Zn(2+) is required as a cofactor.

It is found in the cytoplasm. The catalysed reaction is tRNA(Cys) + L-cysteine + ATP = L-cysteinyl-tRNA(Cys) + AMP + diphosphate. The polypeptide is Cysteine--tRNA ligase (Anaeromyxobacter sp. (strain K)).